Reading from the N-terminus, the 142-residue chain is uncharacterized protein (142 aa).

Residues 2-142 enclose the N-acetyltransferase domain; the sequence is IHMKQLTSKE…IESYLFRKPV (141 aa).

It belongs to the acetyltransferase family.

This is an uncharacterized protein from Bacillus subtilis (strain 168).